We begin with the raw amino-acid sequence, 55 residues long: Large ribosomal subunit protein bL33 (55 aa).

The protein belongs to the bacterial ribosomal protein bL33 family.

The chain is Large ribosomal subunit protein bL33 from Bordetella pertussis (strain Tohama I / ATCC BAA-589 / NCTC 13251).